Consider the following 426-residue polypeptide: Serine--tRNA ligase (426 aa).

An L-serine-binding site is contributed by 233–235 (TAE). 264–266 (RRE) is an ATP binding site. Residue glutamate 287 participates in L-serine binding. 351–354 (EISS) serves as a coordination point for ATP. An L-serine-binding site is contributed by serine 386.

It belongs to the class-II aminoacyl-tRNA synthetase family. Type-1 seryl-tRNA synthetase subfamily. Homodimer. The tRNA molecule binds across the dimer.

It is found in the cytoplasm. It catalyses the reaction tRNA(Ser) + L-serine + ATP = L-seryl-tRNA(Ser) + AMP + diphosphate + H(+). It carries out the reaction tRNA(Sec) + L-serine + ATP = L-seryl-tRNA(Sec) + AMP + diphosphate + H(+). It functions in the pathway aminoacyl-tRNA biosynthesis; selenocysteinyl-tRNA(Sec) biosynthesis; L-seryl-tRNA(Sec) from L-serine and tRNA(Sec): step 1/1. Its function is as follows. Catalyzes the attachment of serine to tRNA(Ser). Is also able to aminoacylate tRNA(Sec) with serine, to form the misacylated tRNA L-seryl-tRNA(Sec), which will be further converted into selenocysteinyl-tRNA(Sec). The chain is Serine--tRNA ligase from Prochlorococcus marinus (strain NATL2A).